A 134-amino-acid chain; its full sequence is UPF0412 protein YaaI (134 aa).

The N-terminal stretch at 1-23 is a signal peptide; it reads MRSVLTISVGLLFGLALSSVAHA.

It belongs to the UPF0412 family.

In Salmonella paratyphi A (strain ATCC 9150 / SARB42), this protein is UPF0412 protein YaaI.